A 96-amino-acid polypeptide reads, in one-letter code: Small ribosomal subunit protein bS6 (96 aa).

It belongs to the bacterial ribosomal protein bS6 family.

In terms of biological role, binds together with bS18 to 16S ribosomal RNA. In Streptococcus uberis (strain ATCC BAA-854 / 0140J), this protein is Small ribosomal subunit protein bS6.